Reading from the N-terminus, the 1438-residue chain is DNA polymerase III PolC-type (1438 aa).

In terms of domain architecture, Exonuclease spans 422–578 (YVVFDVETTG…YDTEATAYIF (157 aa)).

This sequence belongs to the DNA polymerase type-C family. PolC subfamily.

The protein localises to the cytoplasm. The catalysed reaction is DNA(n) + a 2'-deoxyribonucleoside 5'-triphosphate = DNA(n+1) + diphosphate. In terms of biological role, required for replicative DNA synthesis. This DNA polymerase also exhibits 3' to 5' exonuclease activity. This Staphylococcus aureus (strain Mu3 / ATCC 700698) protein is DNA polymerase III PolC-type.